The primary structure comprises 475 residues: Luvungin A synthase CYP716AC1 (475 aa).

A helical transmembrane segment spans residues 3–23; sequence FIILSLLLLSLALYSLYYVII. Residue cysteine 423 participates in heme binding.

This sequence belongs to the cytochrome P450 family. It depends on heme as a cofactor. In terms of tissue distribution, expressed in flowers, maturing fruits and in juice vesicles.

Its subcellular location is the membrane. The enzyme catalyses (21S)-21-acetoxyl-apo-melianone + reduced [NADPH--hemoprotein reductase] + O2 = luvungin A + oxidized [NADPH--hemoprotein reductase] + H2O + H(+). The protein operates within secondary metabolite biosynthesis; terpenoid biosynthesis. Functionally, monooxygenase involved in the biosynthesis of limonoids triterpene natural products such as limonin, a compound with insecticidal activity responsible for the bitter taste in citrus. Catalyzes the conversion of (21S)-21-acetoxyl-apo-melianone to luvungin A. The protein is Luvungin A synthase CYP716AC1 of Citrus sinensis (Sweet orange).